Here is a 161-residue protein sequence, read N- to C-terminus: Periplasmic chaperone Spy (161 aa).

Positions 1 to 23 (MRKLTALFVASTLALGAANLAHA) are cleaved as a signal peptide. The segment at 140–161 (ANFEKRLTERPAAKGKMPATAE) is disordered. Basic and acidic residues predominate over residues 142-151 (FEKRLTERPA).

The protein belongs to the CpxP/Spy family. As to quaternary structure, homodimer.

The protein resides in the periplasm. An ATP-independent periplasmic chaperone, decreases protein aggregation and helps protein refolding. Binds substrate over a large region of its convex inner surface. Substrate protein folds while it is bound to chaperone. Increasing Spy flexibility increases its substrate affinity and overall chaperone activity (shown for 3 different substrates). Protects proteins in vitro against tannin inactivation; tannins have antimicrobial activity. Overexpression enhances the stability of otherwise unstable periplasmic proteins. The chain is Periplasmic chaperone Spy from Escherichia coli (strain K12).